We begin with the raw amino-acid sequence, 319 residues long: tRNA U34 carboxymethyltransferase (319 aa).

Residues Lys-88, Trp-102, Lys-107, Gly-126, 176-177 (LE), Met-192, Tyr-196, and Arg-311 each bind carboxy-S-adenosyl-L-methionine.

Belongs to the class I-like SAM-binding methyltransferase superfamily. CmoB family. As to quaternary structure, homotetramer.

The enzyme catalyses carboxy-S-adenosyl-L-methionine + 5-hydroxyuridine(34) in tRNA = 5-carboxymethoxyuridine(34) in tRNA + S-adenosyl-L-homocysteine + H(+). Functionally, catalyzes carboxymethyl transfer from carboxy-S-adenosyl-L-methionine (Cx-SAM) to 5-hydroxyuridine (ho5U) to form 5-carboxymethoxyuridine (cmo5U) at position 34 in tRNAs. The chain is tRNA U34 carboxymethyltransferase from Pseudomonas savastanoi pv. phaseolicola (strain 1448A / Race 6) (Pseudomonas syringae pv. phaseolicola (strain 1448A / Race 6)).